The primary structure comprises 228 residues: 2,3-bisphosphoglycerate-dependent phosphoglycerate mutase (228 aa).

Residues 8-15 (RHGQSEWN), 21-22 (TG), arginine 60, 87-90 (ERHY), lysine 98, 114-115 (RR), and 183-184 (GN) contribute to the substrate site. Residue histidine 9 is the Tele-phosphohistidine intermediate of the active site. The active-site Proton donor/acceptor is glutamate 87.

This sequence belongs to the phosphoglycerate mutase family. BPG-dependent PGAM subfamily.

The catalysed reaction is (2R)-2-phosphoglycerate = (2R)-3-phosphoglycerate. Its pathway is carbohydrate degradation; glycolysis; pyruvate from D-glyceraldehyde 3-phosphate: step 3/5. In terms of biological role, catalyzes the interconversion of 2-phosphoglycerate and 3-phosphoglycerate. The protein is 2,3-bisphosphoglycerate-dependent phosphoglycerate mutase of Staphylococcus epidermidis (strain ATCC 12228 / FDA PCI 1200).